The sequence spans 334 residues: tRNA uridine(34) hydroxylase (334 aa).

Positions 123 to 217 constitute a Rhodanese domain; the sequence is SDPDVILVDT…YLEEVKQEES (95 aa). Catalysis depends on C177, which acts as the Cysteine persulfide intermediate.

This sequence belongs to the TrhO family.

The enzyme catalyses uridine(34) in tRNA + AH2 + O2 = 5-hydroxyuridine(34) in tRNA + A + H2O. Functionally, catalyzes oxygen-dependent 5-hydroxyuridine (ho5U) modification at position 34 in tRNAs. This chain is tRNA uridine(34) hydroxylase, found in Shewanella putrefaciens (strain CN-32 / ATCC BAA-453).